The following is a 119-amino-acid chain: MAGLMTIVTSLLFLGVCAHHIIPTGSVVIPSPCCMFFVSKRIPENRVVSYQLSSRSTCLKAGVIFTTKKGQQFCGDPKQEWVQRYMKNLDAKQKKASPRARAVAVKGPVQRYPGNQTTC.

A signal peptide spans 1–26 (MAGLMTIVTSLLFLGVCAHHIIPTGS). 2 disulfides stabilise this stretch: C33–C58 and C34–C74. An N-linked (GlcNAc...) asparagine glycan is attached at N115.

This sequence belongs to the intercrine beta (chemokine CC) family. Post-translationally, N-glycosylated. Activated monocytes and activated T lymphocytes.

Its subcellular location is the secreted. In terms of biological role, chemotactic for resting T-lymphocytes, and eosinophils. Has lower chemotactic activity for neutrophils but none for monocytes and activated lymphocytes. Is a strong suppressor of colony formation by a multipotential hematopoietic progenitor cell line. Binds to CCR3. The sequence is that of C-C motif chemokine 24 from Homo sapiens (Human).